The primary structure comprises 400 residues: MSDILSISELNLAKKRVFIRCDFNVPMDEFLNITDDRRIRSAIPTIRYCLDNGCSVVLASHLGRPKSGFEEKFSLKGVAKRLSRLLDRDVIFANDVIGSDAQNKASALKSGEILMLENLRFEKGETKNDEILAGELAKFGEIYINDAFGVCHRAHASVEAITKFYDDEHKAAGFLLQKEINFAQNLIKKPTRPFVAVVGGSKVSGKLQALHNLLPRVDKLIIGGGMAFTFLKSLGENIGNSLLEEELIDDAREILKKGKELGVKIYLPVDVVAAQSFSAESAVKYVTVQEIPSGWMGLDIGPASVRLFKEVLADAQTVWWNGPMGVFEMDKFSKGSIKMSHAIVETHATTVVGGGDTADVVERAGDADEMTFISTGGGASLELIEGKELPGIKPLRKASE.

Residues Asp-22–Asn-24, Arg-38, His-61–Arg-64, Arg-120, and Arg-153 contribute to the substrate site. ATP is bound by residues Lys-206, Gly-297, Glu-328, and Gly-354 to Thr-357.

The protein belongs to the phosphoglycerate kinase family. Monomer.

It localises to the cytoplasm. The catalysed reaction is (2R)-3-phosphoglycerate + ATP = (2R)-3-phospho-glyceroyl phosphate + ADP. Its pathway is carbohydrate degradation; glycolysis; pyruvate from D-glyceraldehyde 3-phosphate: step 2/5. This Campylobacter curvus (strain 525.92) protein is Phosphoglycerate kinase.